We begin with the raw amino-acid sequence, 234 residues long: Zinc finger BED domain-containing protein 3 (234 aa).

The disordered stretch occupies residues Ala19–Gly42. The BED-type zinc finger occupies Ala43–Ser104. Positions 69, 72, 92, and 97 each coordinate Zn(2+). 2 disordered regions span residues Arg94–Glu126 and Arg202–Asp225. Over residues Pro111–Ala122 the composition is skewed to pro residues. The segment covering Leu216–Asp225 has biased composition (basic and acidic residues).

Associates with the subcortical maternal complex (SCMC) composed of at least NLRP5, KHDC3L, OOEP, and TLE6 via interaction with NLRP5 and TLE6. Interacts with AXIN1; the interaction is direct, enhanced by protein kinase GSK3B and casein kinase CSNK1E activities and decreases GSK3B-induced beta-catenin serine and threonine phosphorylations. In terms of tissue distribution, secreted in blood plasma, and expressed in skeletal muscle and adipose tissue (at protein level).

The protein resides in the cytoplasm. Its subcellular location is the membrane. The protein localises to the secreted. Acts as a positive regulator in the activation of the canonical Wnt/beta-catenin signaling pathway by stabilizing cytoplasmic beta-catenin. Involved in transcription activation of Wnt target gene expression. Plays a role in symmetric division of blastomeres in the early stages of embryogenesis via regulation of mitotic spindle central positioning and organization of the F-actin filament network. Plays a role in regulating the distribution of cellular organelles, via modulation of cytoskeletal dynamics and cytoplasmic lattice formation. The protein is Zinc finger BED domain-containing protein 3 (ZBED3) of Homo sapiens (Human).